Consider the following 187-residue polypeptide: Tetratricopeptide repeat protein 36 (187 aa).

TPR repeat units follow at residues 47–80 (VKDL…LPQR), 82–114 (SAYN…SNGK), and 119–152 (CQAL…GSEF).

Belongs to the TTC36 family.

The sequence is that of Tetratricopeptide repeat protein 36 (ttc36) from Danio rerio (Zebrafish).